The sequence spans 218 residues: Small ribosomal subunit protein uS3c (218 aa).

Residues 43 to 118 enclose the KH type-2 domain; that stretch reads IKNYVQKNPR…RLNIAIARIS (76 aa).

This sequence belongs to the universal ribosomal protein uS3 family. As to quaternary structure, part of the 30S ribosomal subunit.

It is found in the plastid. The protein localises to the chloroplast. The sequence is that of Small ribosomal subunit protein uS3c (rps3) from Acorus calamus (Sweet flag).